A 66-amino-acid polypeptide reads, in one-letter code: Moricin-1 (66 aa).

An N-terminal signal peptide occupies residues 1–24 (MNILKFFFVFIVAMSLVSCSTAAP).

In terms of tissue distribution, expressed in fat body and to a lesser extent in hemocyte and Malpighian tubules.

The protein resides in the secreted. Functionally, has antibacterial activity against Gram-positive and Gram-negative bacteria. Probably acts by disturbing membrane functions with its amphipathic structure. This Bombyx mori (Silk moth) protein is Moricin-1 (MOR1).